The following is a 182-amino-acid chain: Ribosome maturation factor RimM (182 aa).

The PRC barrel domain maps to 103 to 182 (EDEFYWRELF…RIEVDWDPAF (80 aa)).

The protein belongs to the RimM family. Binds ribosomal protein uS19.

It is found in the cytoplasm. In terms of biological role, an accessory protein needed during the final step in the assembly of 30S ribosomal subunit, possibly for assembly of the head region. Essential for efficient processing of 16S rRNA. May be needed both before and after RbfA during the maturation of 16S rRNA. It has affinity for free ribosomal 30S subunits but not for 70S ribosomes. In Vibrio cholerae serotype O1 (strain ATCC 39315 / El Tor Inaba N16961), this protein is Ribosome maturation factor RimM.